Here is a 28-residue protein sequence, read N- to C-terminus: Short cationic peptide-1a (28 aa).

Glutamic acid 1-amide is present on Glu28.

Expressed by the venom gland.

It is found in the secreted. The protein is Short cationic peptide-1a of Cupiennius salei (American wandering spider).